The sequence spans 455 residues: Pentatricopeptide repeat-containing protein At3g26630, chloroplastic (455 aa).

The transit peptide at Met1–Arg19 directs the protein to the chloroplast. PPR repeat units lie at residues Asp51–Pro81, Ser82–Phe117, Asp118–Asn152, Asp153–Ser187, Trp188–Arg214, Asn215–Pro249, Asn250–Leu284, Asp285–Lys315, Ser316–Glu350, Asp352–Pro387, and Ile388–Asp418.

Belongs to the PPR family. PCMP-A subfamily.

The protein resides in the plastid. It is found in the chloroplast. This chain is Pentatricopeptide repeat-containing protein At3g26630, chloroplastic (PCMP-A6), found in Arabidopsis thaliana (Mouse-ear cress).